We begin with the raw amino-acid sequence, 499 residues long: uncharacterized protein (499 aa).

FAD contacts are provided by residues 6–35 (EAVIIGGGPVGFMLASELAIAGVGTCVIER) and 272–282 (YRDGRIFLAGD).

It belongs to the PheA/TfdB FAD monooxygenase family. FAD is required as a cofactor.

This is an uncharacterized protein from Bacillus subtilis (strain 168).